The chain runs to 71 residues: Large ribosomal subunit protein uL29 (71 aa).

It belongs to the universal ribosomal protein uL29 family.

The sequence is that of Large ribosomal subunit protein uL29 from Rickettsia typhi (strain ATCC VR-144 / Wilmington).